The chain runs to 566 residues: Phosphatidylinositol 3,4,5-trisphosphate 3-phosphatase TPTE2 (566 aa).

A run of 4 helical transmembrane segments spans residues 135-155 (SFAF…LLLA), 173-193 (ISLA…FVEG), 208-228 (AIIV…IKFL), and 234-254 (WIHL…HLIH). In terms of domain architecture, Phosphatase tensin-type spans 272-448 (RRYTRDGFDL…GYFAQVKHLY (177 aa)). The active-site Phosphocysteine intermediate is Cys-382. Residues 455 to 566 (RRILFIKRFI…ILHSFRLVFT (112 aa)) enclose the C2 tensin-type domain.

It localises to the endoplasmic reticulum membrane. The protein localises to the golgi apparatus membrane. It catalyses the reaction a 1,2-diacyl-sn-glycero-3-phospho-(1D-myo-inositol-3,4,5-trisphosphate) + H2O = a 1,2-diacyl-sn-glycero-3-phospho-(1D-myo-inositol-4,5-bisphosphate) + phosphate. Functionally, acts as a lipid phosphatase, removing the phosphate in the D3 position of the inositol ring from phosphatidylinositol 3,4,5-trisphosphate. The polypeptide is Phosphatidylinositol 3,4,5-trisphosphate 3-phosphatase TPTE2 (TPTE2) (Macaca fascicularis (Crab-eating macaque)).